Consider the following 111-residue polypeptide: Large ribosomal subunit protein uL24 (111 aa).

Belongs to the universal ribosomal protein uL24 family. Part of the 50S ribosomal subunit.

One of two assembly initiator proteins, it binds directly to the 5'-end of the 23S rRNA, where it nucleates assembly of the 50S subunit. In terms of biological role, one of the proteins that surrounds the polypeptide exit tunnel on the outside of the subunit. This chain is Large ribosomal subunit protein uL24, found in Bifidobacterium longum (strain DJO10A).